A 129-amino-acid polypeptide reads, in one-letter code: uncharacterized protein (129 aa).

Disordered regions lie at residues 1–57 and 87–129; these read MGGG…LPNH and PVSS…WLWW. Residues 10-20 show a composition bias toward basic and acidic residues; it reads SGEERREKRSG. Over residues 87-99 the composition is skewed to low complexity; the sequence is PVSSSPSRSPSSS.

This is an uncharacterized protein from Homo sapiens (Human).